The chain runs to 542 residues: MRRSGNGGAAKKKKKRSASAASERRPRADGGMRIVVPLQGVVQGRGGLVLGSLIPCALFYFFQLYIKRNRASPPPPPGSPTAASAAAVSPIHRSLSRGLLAPRAALPAISARGASVRDDDSLYYAGLRRCAADPYHPVTNPSGIIQLGLAENYLSLDLVGRWMEEHAAEAASMAGGEDEDERELSIRGLAAYQPYDGILALKMALAGFMRQIMQGSVSFEPSQVVITSGATPAMEILSFCLADPGNAFLVPSPYYPGWDRDIKWRTGIELIPVPCRSTDNFNISITALEIAYNQAKKRGIKVRGVLISNPNNPTGSFVPKQTLHDLLEFAAEKNIHLISDEVFAGSTYGSGKFVSVAEVVDDLEDFDKGRVHIIYGLSKDLSLAGFRVGVIYSYNESIVTAAAKIARFSSVSTPTQRLLVAMLSDQKFISDYLKVNRERLRKMYHLFVDALDQVGIECYKSSGGFYCWADMSKFIRSYSEKGERKLWDRLLEEAKVNVTPGSSCHCIEPGWFRCCFTTLSEHDIPVLVQRLRTITDSHKPNH.

Residues 1–28 form a disordered region; the sequence is MRRSGNGGAAKKKKKRSASAASERRPRA. An N6-(pyridoxal phosphate)lysine modification is found at K379.

It belongs to the class-I pyridoxal-phosphate-dependent aminotransferase family. Requires pyridoxal 5'-phosphate as cofactor. In terms of tissue distribution, expressed in leaves.

It is found in the plastid. The protein resides in the amyloplast membrane. The catalysed reaction is S-adenosyl-L-methionine = 1-aminocyclopropane-1-carboxylate + S-methyl-5'-thioadenosine + H(+). The protein operates within alkene biosynthesis; ethylene biosynthesis via S-adenosyl-L-methionine; ethylene from S-adenosyl-L-methionine: step 1/2. Its function is as follows. Catalyzes the formation of 1-aminocyclopropane-1-carboxylate, a direct precursor of ethylene in higher plants. Required for the regulation of starch grain size in endosperm. This chain is 1-aminocyclopropane-1-carboxylate synthase 6, found in Oryza sativa subsp. japonica (Rice).